Consider the following 488-residue polypeptide: Aspartyl/glutamyl-tRNA(Asn/Gln) amidotransferase subunit B (488 aa).

The protein belongs to the GatB/GatE family. GatB subfamily. As to quaternary structure, heterotrimer of A, B and C subunits.

The enzyme catalyses L-glutamyl-tRNA(Gln) + L-glutamine + ATP + H2O = L-glutaminyl-tRNA(Gln) + L-glutamate + ADP + phosphate + H(+). The catalysed reaction is L-aspartyl-tRNA(Asn) + L-glutamine + ATP + H2O = L-asparaginyl-tRNA(Asn) + L-glutamate + ADP + phosphate + 2 H(+). Allows the formation of correctly charged Asn-tRNA(Asn) or Gln-tRNA(Gln) through the transamidation of misacylated Asp-tRNA(Asn) or Glu-tRNA(Gln) in organisms which lack either or both of asparaginyl-tRNA or glutaminyl-tRNA synthetases. The reaction takes place in the presence of glutamine and ATP through an activated phospho-Asp-tRNA(Asn) or phospho-Glu-tRNA(Gln). The polypeptide is Aspartyl/glutamyl-tRNA(Asn/Gln) amidotransferase subunit B (Ralstonia pickettii (strain 12J)).